The following is a 156-amino-acid chain: Male-specific protein scotti (156 aa).

The tract at residues threonine 26–glutamine 48 is disordered. A glycan (N-linked (GlcNAc...) asparagine) is linked at asparagine 137.

The protein belongs to the male-specific scotti family.

Functionally, post-meiotically transcribed gene that has a role in late spermiogenesis; required for actin cone progression during spermatid individualization. The sequence is that of Male-specific protein scotti from Drosophila erecta (Fruit fly).